The following is a 333-amino-acid chain: D-glutamate N-acetyltransferase (333 aa).

It belongs to the N-acetyltransferase DgcN family.

The catalysed reaction is D-glutamate + acetyl-CoA = N-acetyl-D-glutamate + CoA + H(+). Its pathway is amino-acid degradation. Its function is as follows. N-acetyltransferase involved in a deamination-independent D-glutamate degradation pathway, named the DgcN-DgcA pathway. Catalyzes the transfer of the acetyl moiety from acetyl-CoA to D-glutamate to generate N-acetyl-D-glutamate. The chain is D-glutamate N-acetyltransferase from Tritonibacter scottomollicae (Epibacterium scottomollicae).